We begin with the raw amino-acid sequence, 253 residues long: 3-deoxy-manno-octulosonate cytidylyltransferase (253 aa).

Belongs to the KdsB family.

It is found in the cytoplasm. It catalyses the reaction 3-deoxy-alpha-D-manno-oct-2-ulosonate + CTP = CMP-3-deoxy-beta-D-manno-octulosonate + diphosphate. The protein operates within nucleotide-sugar biosynthesis; CMP-3-deoxy-D-manno-octulosonate biosynthesis; CMP-3-deoxy-D-manno-octulosonate from 3-deoxy-D-manno-octulosonate and CTP: step 1/1. Its pathway is bacterial outer membrane biogenesis; lipopolysaccharide biosynthesis. Functionally, activates KDO (a required 8-carbon sugar) for incorporation into bacterial lipopolysaccharide in Gram-negative bacteria. This Edwardsiella ictaluri (strain 93-146) protein is 3-deoxy-manno-octulosonate cytidylyltransferase.